The following is a 314-amino-acid chain: tRNA pseudouridine synthase B (314 aa).

A substrate-binding site is contributed by H43. D48 functions as the Nucleophile in the catalytic mechanism. Substrate-binding residues include Y76, Y179, and L200.

The protein belongs to the pseudouridine synthase TruB family. Type 1 subfamily.

The enzyme catalyses uridine(55) in tRNA = pseudouridine(55) in tRNA. In terms of biological role, responsible for synthesis of pseudouridine from uracil-55 in the psi GC loop of transfer RNAs. The protein is tRNA pseudouridine synthase B of Salmonella paratyphi B (strain ATCC BAA-1250 / SPB7).